The sequence spans 72 residues: MKVGIHPEYKAVSATCSCGNTFEFNSTLAKESIHLDVCDKCHPFYTGKQRIVDTGGRVDRFNKRFGALSSKK.

Residues cysteine 16, cysteine 18, cysteine 38, and cysteine 41 each contribute to the Zn(2+) site.

The protein belongs to the bacterial ribosomal protein bL31 family. Type A subfamily. In terms of assembly, part of the 50S ribosomal subunit. The cofactor is Zn(2+).

Binds the 23S rRNA. This Vibrio atlanticus (strain LGP32) (Vibrio splendidus (strain Mel32)) protein is Large ribosomal subunit protein bL31.